A 241-amino-acid polypeptide reads, in one-letter code: tRNA (guanine-N(7)-)-methyltransferase (241 aa).

Polar residues predominate over residues 1–10; that stretch reads MTESNETPNT. Positions 1-21 are disordered; it reads MTESNETPNTPEAGDESKHRR. Residues glutamate 71, glutamate 96, aspartate 123, and aspartate 146 each contribute to the S-adenosyl-L-methionine site. The active site involves aspartate 146. Substrate-binding positions include lysine 150, aspartate 182, and 219–222; that span reads TKFE.

This sequence belongs to the class I-like SAM-binding methyltransferase superfamily. TrmB family.

The enzyme catalyses guanosine(46) in tRNA + S-adenosyl-L-methionine = N(7)-methylguanosine(46) in tRNA + S-adenosyl-L-homocysteine. Its pathway is tRNA modification; N(7)-methylguanine-tRNA biosynthesis. Functionally, catalyzes the formation of N(7)-methylguanine at position 46 (m7G46) in tRNA. In Pseudomonas fluorescens (strain SBW25), this protein is tRNA (guanine-N(7)-)-methyltransferase.